Consider the following 962-residue polypeptide: MTRMRVHELAKELNMDNKDLIDRILKLGIQVKNHMSTLTDSAVLKIRQQFSEAKTETVEEKRIGRAVIRRRKKLTEGESAAAPAEGEERVASEALPVEAEMPAQPVEAPELIAEPISKLPPEVGVAQPQLPEEPEPAPEPLIPAVKPEEAAASELAVEPQTVVPPVAAPAAEVKPARPPMEAPAPARKPPEEKETKVKHAEPESLAEPLPSPAPVELTLVPAESAAGQVAERTDEEEEEDDKARPKKAKKRRRKKVRKDEPARIIKLPEIIPEEPEEEAVLPAHLATRIQVKTEEVEVKEAPRKKRPRPEEFEKEAAERKAKGTRRKEVFEREDLYSKQEIAAQDDRGRLKGDKRRPFAKEPARPEIAVVKPGKRKIRVDEAITVANLAKQMGIKATELIKKLLLLGLPANINQAVDFDTAALLASEFEFEVEKTGFEEEELLQVREDRVEDLIRRPPVITVMGHVDHGKTSLLDAIRDTNVIGGEAGGITQHIGAYYVMLPNGNVVFLDTPGHEAFTSMRARGAKVTDIVILVVAADDGVMQQTIEAINHAKAAEVPIIVAINKVDKPNANIDRVKRELAEHGLIPEEWGGNVTMVGISAKKRTGIEELLEMVLLQAELLELKANPAKPARGRVIEAKLDKGRGPVATILIQEGTLRTGDVYLCGVNSGRVRNMFSDRGQRLDEAGPSMPVEVLGLSGVPNAGDDFITLPDERQAKMIAEHRLVKLREKELSRTSKVTLESLFEQIQEGEIKELNLILKADVHGSLEAITDSLLKLSTPEVKVSLIHFGTGAVIETDVMLASASNAIVIGFNVRSETKVQELADQENVDVRYYDVIYQLLSDVKDAMVGMLEPVFKENVIGRAEVRQTFQVPKIGMIAGSFVLEGRVERNAKCRVLRDHVVTYDGKISSLRRFKDDAKEVKAGFECGIGVENFNDIKVGDILEVYELQEMKPVLESPPGDK.

Disordered stretches follow at residues 122 to 263 (EVGV…EPAR), 293 to 327 (TEEV…TRRK), and 341 to 362 (IAAQ…AKEP). Over residues 156–173 (AVEPQTVVPPVAAPAAEV) the composition is skewed to low complexity. The span at 188–202 (KPPEEKETKVKHAEP) shows a compositional bias: basic and acidic residues. A compositionally biased stretch (basic residues) spans 244-256 (RPKKAKKRRRKKV). Composition is skewed to basic and acidic residues over residues 308–327 (RPEE…TRRK) and 344–362 (QDDR…AKEP). Residues 455–624 (RRPPVITVMG…LLQAELLELK (170 aa)) form the tr-type G domain. The interval 464-471 (GHVDHGKT) is G1. GTP is bound at residue 464 to 471 (GHVDHGKT). Residues 489–493 (GITQH) are G2. The tract at residues 510–513 (DTPG) is G3. GTP-binding positions include 510-514 (DTPGH) and 564-567 (NKVD). The segment at 564 to 567 (NKVD) is G4. Residues 600–602 (SAK) are G5.

It belongs to the TRAFAC class translation factor GTPase superfamily. Classic translation factor GTPase family. IF-2 subfamily.

It is found in the cytoplasm. Functionally, one of the essential components for the initiation of protein synthesis. Protects formylmethionyl-tRNA from spontaneous hydrolysis and promotes its binding to the 30S ribosomal subunits. Also involved in the hydrolysis of GTP during the formation of the 70S ribosomal complex. This chain is Translation initiation factor IF-2, found in Syntrophobacter fumaroxidans (strain DSM 10017 / MPOB).